The chain runs to 48 residues: uncharacterized protein (48 aa).

Its subcellular location is the mitochondrion. This is an uncharacterized protein from Emericella nidulans (Aspergillus nidulans).